The primary structure comprises 222 residues: MIF4G domain-containing protein (222 aa).

The 203-residue stretch at 3 to 205 folds into the MIF4G domain; it reads EPSREEYKIQ…LEIIEFRAAG (203 aa).

The protein belongs to the MIF4GD family. Interacts with EIF4G1, EIF4G2 and SLBP; probably tethered by SLBP to the 3'-end of mRNAs ending with the histone stem-loop, it also interacts with EIF4G1 which is bound to their 5'-end.

It localises to the cytoplasm. It is found in the nucleus. Its function is as follows. Functions in replication-dependent translation of histone mRNAs which differ from other eukaryotic mRNAs in that they do not end with a poly-A tail but a stem-loop. May participate in circularizing those mRNAs specifically enhancing their translation. The chain is MIF4G domain-containing protein (MIF4GD) from Homo sapiens (Human).